The following is a 298-amino-acid chain: MKKNIIIGSRGSILALAQANLVKDRLQGNYPNLSFEIKEIVTSGDKDLKSNWENSDISLKSFFTKEIEQELLDGEIDIAVHSMKDMPAVSAKSLICGAIPDREDPRDVLVSKNGLLVTLPQGAKVGTSSLRRAMNLKTVRPDFEIKHLRGNIHTRLKKLETEDYDAIVLAAAGLKRTGLADKITEYLNGEVFPPAPAQGVLYIQCRENDEEIKEILKSIHNEAIAKIVEIEREFSKIFDGGCHTPMGCYSQVNGDKIKFTAVYLDEGKQIRAVVEDDLAKGKEIAYMAAEEIKNKIVK.

C242 bears the S-(dipyrrolylmethanemethyl)cysteine mark.

The protein belongs to the HMBS family. As to quaternary structure, monomer. It depends on dipyrromethane as a cofactor.

It carries out the reaction 4 porphobilinogen + H2O = hydroxymethylbilane + 4 NH4(+). It participates in porphyrin-containing compound metabolism; protoporphyrin-IX biosynthesis; coproporphyrinogen-III from 5-aminolevulinate: step 2/4. Tetrapolymerization of the monopyrrole PBG into the hydroxymethylbilane pre-uroporphyrinogen in several discrete steps. The chain is Porphobilinogen deaminase from Fusobacterium nucleatum subsp. nucleatum (strain ATCC 25586 / DSM 15643 / BCRC 10681 / CIP 101130 / JCM 8532 / KCTC 2640 / LMG 13131 / VPI 4355).